A 48-amino-acid chain; its full sequence is Mating-type pheromone BAP1(2) (48 aa).

Cys-45 is modified (cysteine methyl ester). Residue Cys-45 is the site of S-farnesyl cysteine attachment. Positions 46–48 are cleaved as a propeptide — removed in mature form; it reads VRG.

It is found in the cell membrane. Its function is as follows. Activates B-regulated development. The polypeptide is Mating-type pheromone BAP1(2) (BAP1(2)) (Schizophyllum commune (Split gill fungus)).